The primary structure comprises 234 residues: Adenosine 5'-phosphosulfate reductase (234 aa).

[4Fe-4S] cluster is bound by residues C120, C121, C203, and C206. Catalysis depends on C229, which acts as the Nucleophile; cysteine thiosulfonate intermediate.

Belongs to the PAPS reductase family. CysH subfamily. Requires [4Fe-4S] cluster as cofactor.

It localises to the cytoplasm. It catalyses the reaction [thioredoxin]-disulfide + sulfite + AMP + 2 H(+) = adenosine 5'-phosphosulfate + [thioredoxin]-dithiol. Its pathway is sulfur metabolism; hydrogen sulfide biosynthesis; sulfite from sulfate. Functionally, catalyzes the formation of sulfite from adenosine 5'-phosphosulfate (APS) using thioredoxin as an electron donor. The protein is Adenosine 5'-phosphosulfate reductase of Bacillus cereus (strain AH820).